Consider the following 653-residue polypeptide: Polyadenylate-binding protein, cytoplasmic and nuclear (653 aa).

Over residues 1 to 10 (MPSTDLKKQA) the composition is skewed to basic and acidic residues. Residues 1 to 77 (MPSTDLKKQA…SVATPSGTAP (77 aa)) form a disordered region. A compositionally biased stretch (polar residues) spans 17–27 (DVNTNNEAVES). A compositionally biased stretch (low complexity) spans 53–68 (AAEPSESTSTPTNASS). Residues 80-158 (ASLYVGELDP…RPCRIMWSQR (79 aa)) enclose the RRM 1 domain. Thr-167 carries the post-translational modification Phosphothreonine. RRM domains follow at residues 168–245 (GNVF…HHVS), 261–338 (TNVY…RAQK), and 364–441 (VNLF…LAQR). In terms of domain architecture, PABC spans 569–646 (PERFTAADLA…AIGVLQEFVD (78 aa)).

The protein belongs to the polyadenylate-binding protein type-1 family. Interacts with cid13.

It localises to the cytoplasm. It is found in the nucleus. Its function is as follows. Binds the poly(A) tail of mRNA. Appears to be an important mediator of the multiple roles of the poly(A) tail in mRNA biogenesis, stability and translation. In the nucleus, involved in both mRNA cleavage and polyadenylation. Is also required for efficient mRNA export to the cytoplasm. Acts in concert with a poly(A)-specific nuclease (PAN) to affect poly(A) tail shortening, which may occur concomitantly with either nucleocytoplasmic mRNA transport or translational initiation. In the cytoplasm, stimulates translation initiation and regulates mRNA decay through translation termination-coupled poly(A) shortening, probably mediated by PAN. In Schizosaccharomyces pombe (strain 972 / ATCC 24843) (Fission yeast), this protein is Polyadenylate-binding protein, cytoplasmic and nuclear (pab1).